Reading from the N-terminus, the 200-residue chain is Protein GrpE (200 aa).

Composition is skewed to acidic residues over residues 1-17 (MNEQ…EQFD) and 34-44 (AFAEAGEETRD). The tract at residues 1-49 (MNEQPNEELQSEDEQFDPQETVSFEGETAANDEAFAEAGEETRDEEMTR) is disordered.

It belongs to the GrpE family. As to quaternary structure, homodimer.

It localises to the cytoplasm. Functionally, participates actively in the response to hyperosmotic and heat shock by preventing the aggregation of stress-denatured proteins, in association with DnaK and GrpE. It is the nucleotide exchange factor for DnaK and may function as a thermosensor. Unfolded proteins bind initially to DnaJ; upon interaction with the DnaJ-bound protein, DnaK hydrolyzes its bound ATP, resulting in the formation of a stable complex. GrpE releases ADP from DnaK; ATP binding to DnaK triggers the release of the substrate protein, thus completing the reaction cycle. Several rounds of ATP-dependent interactions between DnaJ, DnaK and GrpE are required for fully efficient folding. This Rhodopirellula baltica (strain DSM 10527 / NCIMB 13988 / SH1) protein is Protein GrpE.